Reading from the N-terminus, the 238-residue chain is Ribosomal RNA small subunit methyltransferase G (238 aa).

Residues Gly-78, 129–130 (AE), and Arg-148 each bind S-adenosyl-L-methionine.

The protein belongs to the methyltransferase superfamily. RNA methyltransferase RsmG family.

Its subcellular location is the cytoplasm. In terms of biological role, specifically methylates the N7 position of a guanine in 16S rRNA. The polypeptide is Ribosomal RNA small subunit methyltransferase G (Caldicellulosiruptor bescii (strain ATCC BAA-1888 / DSM 6725 / KCTC 15123 / Z-1320) (Anaerocellum thermophilum)).